Consider the following 211-residue polypeptide: Porin MspA (211 aa).

The N-terminal stretch at 1–27 is a signal peptide; the sequence is MKAISRVLIAMVAAIAALFTSTGTSHA.

Belongs to the mycobacterial porin (TC 1.B.24) family. Forms very stable octamers. Isolated as a 100 kDa complex that can be reduced to monomers upon boiling in 80% dimethyl sulfoxide for 15 minutes. Structures show a goblet with the wide end on the exterior of the outer membrane and a central channel. It is not known if mixed oligomers of MspA with other Msp subunits form in vivo.

The protein resides in the cell outer membrane. It localises to the secreted. It is found in the cell wall. The major porin in this organism, forms a water-filled channel which favors the permeation of cations, amino acids, iron Fe(3+) and less efficiently phosphate. Does not transport Fe-ExoMS, the predominant siderophore. Plays a role in transport of beta-lactamase and hydrophilic fluoroquinolone antibiotics such as norfloxacin as well as chloramphenicol. There are about 2400 porins in wild-type, 800 in an mspA deletion and 150 in a double mspA-mspC deletion. Different conductance values with maxima at 2.3 and 4.6 nanosiemens might be caused by a simultaneous reconstitution of MspA channels into the membrane or by the existence of different MspA conformations. The protein is Porin MspA (mspA) of Mycolicibacterium smegmatis (strain ATCC 700084 / mc(2)155) (Mycobacterium smegmatis).